A 173-amino-acid chain; its full sequence is HAM34 protein (173 aa).

Residues 22 to 89 show a composition bias toward low complexity; the sequence is AAPATTPDTA…ADGTQTATAP (68 aa). Residues 22–155 form a disordered region; the sequence is AAPATTPDTA…ATDTTSGASH (134 aa). Residues 95 to 133 are compositionally biased toward polar residues; that stretch reads TEESSASGEMTPTVGTDTSDQVSDSTAAGPSTPEGSMTG. The span at 134–155 shows a compositional bias: low complexity; it reads TSTPKASDSSSSATDTTSGASH.

Germinating spores.

In terms of biological role, could be a structural protein required for the infection process of B.lactucae. This chain is HAM34 protein (HAM34), found in Bremia lactucae (Lettuce downy mildew).